The following is a 321-amino-acid chain: Ribonuclease Z (321 aa).

Residues His-62, His-64, Asp-66, His-67, His-139, Asp-210, and His-268 each contribute to the Zn(2+) site. The active-site Proton acceptor is the Asp-66.

It belongs to the RNase Z family. In terms of assembly, homodimer. The cofactor is Zn(2+).

The catalysed reaction is Endonucleolytic cleavage of RNA, removing extra 3' nucleotides from tRNA precursor, generating 3' termini of tRNAs. A 3'-hydroxy group is left at the tRNA terminus and a 5'-phosphoryl group is left at the trailer molecule.. Its function is as follows. Zinc phosphodiesterase, which displays some tRNA 3'-processing endonuclease activity. Probably involved in tRNA maturation, by removing a 3'-trailer from precursor tRNA. The sequence is that of Ribonuclease Z from Trichodesmium erythraeum (strain IMS101).